The chain runs to 319 residues: tRNA-cytidine(32) 2-sulfurtransferase (319 aa).

A PP-loop motif motif is present at residues 49–54 (SGGKDS). [4Fe-4S] cluster-binding residues include cysteine 124, cysteine 127, and cysteine 215. The interval 276-319 (DGDTAFDKEEFRDPAPDADDVEDAPKKRTISILDSRGKESGCGA) is disordered. Composition is skewed to basic and acidic residues over residues 280–290 (AFDKEEFRDPA) and 310–319 (SRGKESGCGA).

It belongs to the TtcA family. Homodimer. Mg(2+) is required as a cofactor. [4Fe-4S] cluster serves as cofactor.

The protein resides in the cytoplasm. The enzyme catalyses cytidine(32) in tRNA + S-sulfanyl-L-cysteinyl-[cysteine desulfurase] + AH2 + ATP = 2-thiocytidine(32) in tRNA + L-cysteinyl-[cysteine desulfurase] + A + AMP + diphosphate + H(+). It functions in the pathway tRNA modification. Its function is as follows. Catalyzes the ATP-dependent 2-thiolation of cytidine in position 32 of tRNA, to form 2-thiocytidine (s(2)C32). The sulfur atoms are provided by the cysteine/cysteine desulfurase (IscS) system. The sequence is that of tRNA-cytidine(32) 2-sulfurtransferase from Chromobacterium violaceum (strain ATCC 12472 / DSM 30191 / JCM 1249 / CCUG 213 / NBRC 12614 / NCIMB 9131 / NCTC 9757 / MK).